The chain runs to 211 residues: Large ribosomal subunit protein uL3 (211 aa).

Gln150 carries the post-translational modification N5-methylglutamine.

It belongs to the universal ribosomal protein uL3 family. Part of the 50S ribosomal subunit. Forms a cluster with proteins L14 and L19. Methylated by PrmB.

One of the primary rRNA binding proteins, it binds directly near the 3'-end of the 23S rRNA, where it nucleates assembly of the 50S subunit. The protein is Large ribosomal subunit protein uL3 of Pseudomonas aeruginosa (strain LESB58).